Consider the following 428-residue polypeptide: MNRQGNRKTTKEGSNDLKFQNFSLPKNRSWPRINSATGQYQRMNKPLLDWERNFAAVLDGAKGHSDDDYDDPELRMEETWQSIKILPARPIKESEYADTHYFKVAMDTPLPLDTRTSISIGQPTWNTQTRLERVDKPISKDVRSQNIKGDASVRKNKIPLPPPRPLITLPKKYQPLPPEPESSRPPLSQRHTFPEVQRMPSQISLRDLSEVLEAEKVPHNQRKPESTHLLENQNTQEIPLAISSSSFTTSNHSVQNRDHRGGMQPCSPQRCQPPASCSPHENILPYKYTSWRPPFPKRSDRKDVQHNEWYIGEYSRQAVEEAFMKENKDGSFLVRDCSTKSKEEPYVLAVFYENKVYNVKIRFLERNQQFALGTGLRGDEKFDSVEDIIEHYKNFPIILIDGKDKTGVHRKQCHLTQPLPLTRHLLPL.

Residues 1 to 22 (MNRQGNRKTTKEGSNDLKFQNF) are disordered. Tyrosine 69 and tyrosine 96 each carry phosphotyrosine; by LYN. 2 disordered regions span residues 135-198 (DKPI…EVQR) and 244-271 (SSSFTTSNHSVQNRDHRGGMQPCSPQRC). The segment at 159-164 (PLPPPR) is mediates interaction with PLCG1; essential for BCR signaling; involved in restoration of BCR-induced calcium response and ERK2 and JNK2 activation in BLNK-deficient cells expressing LAT. The mediates interaction with LAT, GRB2, and FGR; involved in translocation to the glycolipid-enriched microdomain and restoration of BCR-induced calcium response in BLNK-deficient DT40 cells expressing LAT stretch occupies residues 178–180 (PEP). Low complexity predominate over residues 244–253 (SSSFTTSNHS). One can recognise an SH2 domain in the interval 309–419 (WYIGEYSRQA…RKQCHLTQPL (111 aa)).

As to quaternary structure, when phosphorylated, interacts with PLCG1, PLCG2, GRB2, VAV and LAT. Interacts with LBR and AGO2. Interacts with FGR. Part of a complex consisting of CLNK, SKAP1 and FYB1. Interacts (via SH2 domain) with FYB1; this interaction allows SKAP1 and FYB1 to promote tyrosine phosphorylation of CLNK by LYN. Interacts (via SH2 domain) with MAP4K1. Post-translationally, tyrosine-phosphorylated upon BCR cross-linking. Tyrosine phosphorylation at both Tyr-69 and Tyr-96 are required for BCR-induced calcium response and are essential to restore PLCG2-mediated signaling in BLNK-deficient DT40 cells, but this phosphorylation is dispensable in cells expressing LAT. Interacts with the SH2 domain of PLCG1 via phosphorylated Tyr-96. Tyrosine phosphorylation is increased when complexed with SKAP1 and FYB1.

The protein localises to the cytoplasm. In terms of biological role, an adapter protein which plays a role in the regulation of immunoreceptor signaling, including PLC-gamma-mediated B-cell antigen receptor (BCR) signaling and FC-epsilon R1-mediated mast cell degranulation. Together with FGR, it acts as a negative regulator of natural killer cell-activating receptors and inhibits interferon-gamma production. Acts as a positive regulator of both T-cell receptor and natural killer T (NKT) cell receptor signaling in CD4-positive NKT cells. Together with MAP4K1, it enhances CD3-triggered activation of T-cells and subsequent IL2 production. May be involved in tumor necrosis factor induced cell death by promoting reactive oxidative species generation, and MLKL oligomerization, ultimately leading to necrosis. Involved in phosphorylation of LAT. May be involved in high affinity immunoglobulin epsilon receptor signaling in mast cells. The protein is Cytokine-dependent hematopoietic cell linker (CLNK) of Homo sapiens (Human).